Consider the following 729-residue polypeptide: MNPFQKNESKETLFSPVSTEEMLPGPPSPPKKSTPKLFGSSYPLSIAFIVVNEFCERFSYYGMKAVLTLYFLYFLHWNEDTSTSVYHAFSSLCYFTPILGAAIADSWLGKFKTIIYLSLVYVLGHVFKSLGAIPILGGKMLHTILSLVGLSLIALGTGGIKPCVAAFGGDQFEEEHAEARTRYFSVFYLSINAGSLISTFITPMLRGDVKCFGEDCYALAFGIPGLLMVLALVVFAMGSKMYRKPPPEGNIVAQVTKCIWFAICNRFRNRSEDIPKRQHWLDWAAEKYPKHLIMDVKALTRILFLYIPLPMFWALLDQQGSRWTLQANKMDGDLGFFVLQPDQMQVLNPFLVLVFIPLFDLVIYRLISKCGVNFSSLRKMAVGMILACLAFAVAALVEIKINGMIHPQPASQEIFLQVLNLADGEIEVTVQGNRNNPLLVESISSFQNTTHYSKLRLETKSQDLHFHLKYNNLSVHNEYSVEEKNCYQLVVHENGESLSSMLVKDTGIKPANGMTAIRFINTLHKDMNISLDANAPLSVGKDYGVSEYRTVQRGKYPAVHCETEDNVFSLNLGQLDFGTTYLFVITNITNRGLQAWKAEDIPANKLSIAWQLPQYVLVTAAEVMFSVTGLEFSYSQAPSSMKSVLQAAWLLTVAVGNIIVLIVAQFSGLVQWAEFVLFSCLLLVVCLIFSVMGYYYVPLKSEGIHEATEKQIPHIQGNMINLETKNTRL.

The segment at 1 to 34 (MNPFQKNESKETLFSPVSTEEMLPGPPSPPKKST) is disordered. Residues 1 to 57 (MNPFQKNESKETLFSPVSTEEMLPGPPSPPKKSTPKLFGSSYPLSIAFIVVNEFCER) lie on the Cytoplasmic side of the membrane. Phosphoserine is present on serine 9. Threonine 12 bears the Phosphothreonine mark. Serine 28 bears the Phosphoserine mark. Residues 58 to 78 (FSYYGMKAVLTLYFLYFLHWN) traverse the membrane as a helical segment. At 79–87 (EDTSTSVYH) the chain is on the extracellular side. Residues 88–108 (AFSSLCYFTPILGAAIADSWL) traverse the membrane as a helical segment. The Cytoplasmic segment spans residues 109-113 (GKFKT). Residues 114–134 (IIYLSLVYVLGHVFKSLGAIP) traverse the membrane as a helical segment. Over 135–139 (ILGGK) the chain is Extracellular. Residues 140-160 (MLHTILSLVGLSLIALGTGGI) form a helical membrane-spanning segment. Residues 161–183 (KPCVAAFGGDQFEEEHAEARTRY) lie on the Cytoplasmic side of the membrane. The helical transmembrane segment at 184 to 204 (FSVFYLSINAGSLISTFITPM) threads the bilayer. Over 205 to 217 (LRGDVKCFGEDCY) the chain is Extracellular. Residues 218–238 (ALAFGIPGLLMVLALVVFAMG) form a helical membrane-spanning segment. The Cytoplasmic portion of the chain corresponds to 239–295 (SKMYRKPPPEGNIVAQVTKCIWFAICNRFRNRSEDIPKRQHWLDWAAEKYPKHLIMD). The helical transmembrane segment at 296–316 (VKALTRILFLYIPLPMFWALL) threads the bilayer. The Extracellular segment spans residues 317 to 343 (DQQGSRWTLQANKMDGDLGFFVLQPDQ). Residues 344–364 (MQVLNPFLVLVFIPLFDLVIY) traverse the membrane as a helical segment. Over 365 to 380 (RLISKCGVNFSSLRKM) the chain is Cytoplasmic. Residues 381–401 (AVGMILACLAFAVAALVEIKI) traverse the membrane as a helical segment. The Extracellular segment spans residues 402 to 611 (NGMIHPQPAS…PANKLSIAWQ (210 aa)). Positions 402 to 611 (NGMIHPQPAS…PANKLSIAWQ (210 aa)) are extracellular domain (ECD). N-linked (GlcNAc...) asparagine glycosylation is found at asparagine 448, asparagine 472, asparagine 528, and asparagine 587. The chain crosses the membrane as a helical span at residues 612–632 (LPQYVLVTAAEVMFSVTGLEF). Residues 633-643 (SYSQAPSSMKS) are Cytoplasmic-facing. Residues 644–664 (VLQAAWLLTVAVGNIIVLIVA) form a helical membrane-spanning segment. Topologically, residues 665–674 (QFSGLVQWAE) are extracellular. A helical transmembrane segment spans residues 675-695 (FVLFSCLLLVVCLIFSVMGYY). Topologically, residues 696–729 (YVPLKSEGIHEATEKQIPHIQGNMINLETKNTRL) are cytoplasmic.

The protein belongs to the major facilitator superfamily. Proton-dependent oligopeptide transporter (POT/PTR) (TC 2.A.17) family. As to quaternary structure, interacts (via extracellular domain region) with trypsin. As to expression, expressed in kidney brush border cells (at protein level). Highly expressed in macrophages.

Its subcellular location is the apical cell membrane. It is found in the cytoplasmic vesicle. The protein localises to the phagosome membrane. The protein resides in the cell membrane. It catalyses the reaction N-acetyl-D-muramoyl-L-alanyl-D-isoglutamine(out) + 3 H(+)(out) = N-acetyl-D-muramoyl-L-alanyl-D-isoglutamine(in) + 3 H(+)(in). The catalysed reaction is a dipeptide(out) + 2 H(+)(out) = a dipeptide(in) + 2 H(+)(in). The enzyme catalyses glycyl-L-leucine(out) + 2 H(+)(out) = glycyl-L-leucine(in) + 2 H(+)(in). It carries out the reaction glycyl-L-lysine(out) + 2 H(+)(out) = glycyl-L-lysine(in) + 2 H(+)(in). It catalyses the reaction glycyl-L-glutamate(out) + 3 H(+)(out) = glycyl-L-glutamate(in) + 3 H(+)(in). The catalysed reaction is L-alanyl-L-alanine(out) + 2 H(+)(out) = L-alanyl-L-alanine(in) + 2 H(+)(in). The enzyme catalyses an L-amino acid tripeptide(out) + 2 H(+)(out) = an L-amino acid tripeptide(in) + 2 H(+)(in). It carries out the reaction carnosine(out) + 2 H(+)(out) = carnosine(in) + 2 H(+)(in). Functionally, proton-coupled amino-acid transporter that transports oligopeptides of 2 to 4 amino acids with a preference for dipeptides. Transports neutral and anionic dipeptides with a proton to peptide stoichiometry of 2:1 or 3:1. In kidney, involved in the absorption of circulating di- and tripeptides from the glomerular filtrate. Can also transport beta-lactam antibiotics, such as the aminocephalosporin cefadroxil, and other antiviral and anticancer drugs. Transports the dipeptide-like aminopeptidase inhibitor bestatin. Also able to transport carnosine. Involved in innate immunity by promoting the detection of microbial pathogens by NOD-like receptors (NLRs). Mediates transport of bacterial peptidoglycans across the plasma membrane or, in macrophages, the phagosome membrane: catalyzes the transport of certain bacterial peptidoglycans, such as muramyl dipeptide (MDP), the NOD2 ligand. This is Solute carrier family 15 member 2 from Mus musculus (Mouse).